The chain runs to 576 residues: Adenine deaminase (576 aa).

This sequence belongs to the metallo-dependent hydrolases superfamily. Adenine deaminase family. It depends on Mn(2+) as a cofactor.

The enzyme catalyses adenine + H2O + H(+) = hypoxanthine + NH4(+). The sequence is that of Adenine deaminase from Bacillus pumilus (strain SAFR-032).